Consider the following 686-residue polypeptide: Rhophilin-2 (686 aa).

The REM-1 domain maps to 26–100 (NPLAQTGRSK…LEGLNISVGV (75 aa)). Residues 46–66 (QILKAMRMRTGAENLLKAATN) form an interaction with Rho region. Positions 111 to 460 (PLIPLGLKET…QLKYTQLRED (350 aa)) constitute a BRO1 domain. The region spanning 515-593 (RSIHFTAEEG…DDIEMKVVSL (79 aa)) is the PDZ domain. Threonine 655 is subject to Phosphothreonine.

Belongs to the RHPN family. In terms of assembly, interacts with GTP-bound RhoA and RhoB. Interacts with both GTP- and GDP-bound RhoA. Interacts with KRT18.

It is found in the cytoplasm. Its subcellular location is the perinuclear region. In terms of biological role, binds specifically to GTP-Rho. May function in a Rho pathway to limit stress fiber formation and/or increase the turnover of F-actin structures in the absence of high levels of RhoA activity. The polypeptide is Rhophilin-2 (RHPN2) (Bos taurus (Bovine)).